A 360-amino-acid chain; its full sequence is Phospho-N-acetylmuramoyl-pentapeptide-transferase (360 aa).

The next 10 membrane-spanning stretches (helical) occupy residues 27–47, 73–93, 98–118, 134–154, 168–188, 199–219, 239–259, 263–283, 288–308, and 337–357; these read GAVM…IEWL, TMGG…WADL, VWAV…DDYL, LVAQ…LGQG, LTFN…VGAS, GLAI…AYLV, LAVF…FNAP, VFMG…VSVV, IVLA…IVQV, and TVVI…LSTL.

The protein belongs to the glycosyltransferase 4 family. MraY subfamily. Mg(2+) is required as a cofactor.

Its subcellular location is the cell inner membrane. It carries out the reaction UDP-N-acetyl-alpha-D-muramoyl-L-alanyl-gamma-D-glutamyl-meso-2,6-diaminopimeloyl-D-alanyl-D-alanine + di-trans,octa-cis-undecaprenyl phosphate = di-trans,octa-cis-undecaprenyl diphospho-N-acetyl-alpha-D-muramoyl-L-alanyl-D-glutamyl-meso-2,6-diaminopimeloyl-D-alanyl-D-alanine + UMP. The protein operates within cell wall biogenesis; peptidoglycan biosynthesis. In terms of biological role, catalyzes the initial step of the lipid cycle reactions in the biosynthesis of the cell wall peptidoglycan: transfers peptidoglycan precursor phospho-MurNAc-pentapeptide from UDP-MurNAc-pentapeptide onto the lipid carrier undecaprenyl phosphate, yielding undecaprenyl-pyrophosphoryl-MurNAc-pentapeptide, known as lipid I. This is Phospho-N-acetylmuramoyl-pentapeptide-transferase from Rhodospirillum rubrum (strain ATCC 11170 / ATH 1.1.1 / DSM 467 / LMG 4362 / NCIMB 8255 / S1).